The sequence spans 585 residues: Parathyroid hormone/parathyroid hormone-related peptide receptor (585 aa).

The first 26 residues, 1–26 (MGAPRISHSLALLLCCSVLSSVYALV), serve as a signal peptide directing secretion. The Extracellular portion of the chain corresponds to 27–185 (DADDVITKEE…REREVFDRLG (159 aa)). 3 disulfide bridges follow: Cys-48–Cys-114, Cys-105–Cys-145, and Cys-128–Cys-167. The segment at 69–90 (MSRSAKTKKEKPAEKLYSQAEE) is disordered. Residues Asn-148, Asn-158, Asn-163, and Asn-173 are each glycosylated (N-linked (GlcNAc...) asparagine). The helical transmembrane segment at 186–209 (MIYTVGYSISLGSLTVAVLILGYF) threads the bilayer. Residues 210-216 (RRLHCTR) lie on the Cytoplasmic side of the membrane. Residues 217–236 (NYIHMHLFVSFMLRAVSIFI) form a helical membrane-spanning segment. Residues 237-276 (KDAVLYSGVSTDEIERITEEELRAFTEPPPADKAGFVGCR) are Extracellular-facing. The chain crosses the membrane as a helical span at residues 277 to 300 (VAVTVFLYFLTTNYYWILVEGLYL). The Cytoplasmic segment spans residues 301–314 (HSLIFMAFFSEKKY). The chain crosses the membrane as a helical span at residues 315–336 (LWGFTLFGWGLPAVFVAVWVTV). Residues 337–355 (RATLANTECWDLSSGNKKW) lie on the Extracellular side of the membrane. The chain crosses the membrane as a helical span at residues 356 to 376 (IIQVPILAAIVVNFILFINII). The Cytoplasmic portion of the chain corresponds to 377-403 (RVLATKLRETNAGRCDTRQQYRKLLKS). The chain crosses the membrane as a helical span at residues 404 to 422 (TLVLMPLFGVHYIVFMATP). The Extracellular portion of the chain corresponds to 423-434 (YTEVSGILWQVQ). Residues 435-457 (MHYEMLFNSFQGFFVAIIYCFCN) traverse the membrane as a helical segment. Topologically, residues 458–585 (GEVQAEIKKS…LLEEERETVM (128 aa)) are cytoplasmic. The Important for interaction with G proteins signature appears at 468–471 (WSRW). Residues 531–585 (PGYVKHGSISENSLPSSGPEPGTKDDGYLNGSGLYEPMVGEQPPPLLEEERETVM) are disordered.

It belongs to the G-protein coupled receptor 2 family. In terms of assembly, homodimer in the absence of bound ligand. Peptide hormone binding leads to dissociation of the homodimer. N-glycosylated.

The protein localises to the cell membrane. In terms of biological role, G-protein-coupled receptor for parathyroid hormone (PTH) and for parathyroid hormone-related peptide (PTHLH). Ligand binding causes a conformation change that triggers signaling via guanine nucleotide-binding proteins (G proteins) and modulates the activity of downstream effectors, such as adenylate cyclase (cAMP). PTH1R is coupled to G(s) G alpha proteins and mediates activation of adenylate cyclase activity. PTHLH dissociates from PTH1R more rapidly than PTH; as consequence, the cAMP response induced by PTHLH decays faster than the response induced by PTH. The protein is Parathyroid hormone/parathyroid hormone-related peptide receptor (PTH1R) of Didelphis virginiana (North American opossum).